The following is a 228-amino-acid chain: uncharacterized protein (228 aa).

The signal sequence occupies residues 1–28; the sequence is MRKKRVITCVMAASLTLGSLLPAGYASA.

This is an uncharacterized protein from Bacillus subtilis (strain 168).